Consider the following 628-residue polypeptide: Very-long-chain aldehyde decarbonylase GL1-2 (628 aa).

The next 5 membrane-spanning stretches (helical) occupy residues 37–57 (GAAPVGSWWLHLLLLFAARGL), 131–151 (GWAIALLLHVLVAEPLFYWAH), 191–211 (VVIGVPLAGAFLMGVGSVGLV), 299–319 (DFVFLAHVVDIMASMHVPFVL), and 331–351 (FVLLPFWPVAFGFMLLMWCCS). Residues 137–277 (LLHVLVAEPL…MPIFDLLGGT (141 aa)) form the Fatty acid hydroxylase domain.

This sequence belongs to the sterol desaturase family. Homodimer.

The protein localises to the endoplasmic reticulum membrane. It catalyses the reaction a long-chain fatty aldehyde + 2 NADPH + O2 + H(+) = a long-chain alkane + formate + 2 NADP(+) + H2O. In terms of biological role, aldehyde decarbonylase involved in the conversion of aldehydes to alkanes. Core component of a very-long-chain alkane synthesis complex. The chain is Very-long-chain aldehyde decarbonylase GL1-2 from Oryza sativa subsp. indica (Rice).